Reading from the N-terminus, the 65-residue chain is Large ribosomal subunit protein bL35 (65 aa).

A disordered region spans residues 1 to 30 (MPKMKTNRGAAKRFRKTASGRFKSKQSHLR). Residues 10 to 30 (AAKRFRKTASGRFKSKQSHLR) are compositionally biased toward basic residues.

It belongs to the bacterial ribosomal protein bL35 family.

This Pseudoalteromonas atlantica (strain T6c / ATCC BAA-1087) protein is Large ribosomal subunit protein bL35.